The primary structure comprises 255 residues: Hydroxyacylglutathione hydrolase (255 aa).

H55, H57, D59, H60, H113, D132, and H170 together coordinate Zn(2+).

The protein belongs to the metallo-beta-lactamase superfamily. Glyoxalase II family. Monomer. It depends on Zn(2+) as a cofactor.

The enzyme catalyses an S-(2-hydroxyacyl)glutathione + H2O = a 2-hydroxy carboxylate + glutathione + H(+). It participates in secondary metabolite metabolism; methylglyoxal degradation; (R)-lactate from methylglyoxal: step 2/2. Its function is as follows. Thiolesterase that catalyzes the hydrolysis of S-D-lactoyl-glutathione to form glutathione and D-lactic acid. The sequence is that of Hydroxyacylglutathione hydrolase from Methylobacterium nodulans (strain LMG 21967 / CNCM I-2342 / ORS 2060).